The following is a 2210-amino-acid chain: Filamin-A (2210 aa).

Calponin-homology (CH) domains are found at residues lysine 15 to serine 120 and histidine 139 to leucine 242. Filamin repeat units lie at residues arginine 249–valine 347, glycine 349–valine 447, alanine 448–valine 544, glycine 545–isoleucine 635, arginine 638–valine 734, glycine 735–glutamate 831, glutamine 832–valine 929, lysine 930–valine 1022, glutamate 1023–valine 1121, phenylalanine 1122–alanine 1217, phenylalanine 1218–alanine 1312, serine 1322–valine 1423, aspartate 1424–isoleucine 1515, threonine 1516–valine 1603, arginine 1606–valine 1698, alanine 1699–valine 1796, leucine 1799–valine 1891, proline 1893–valine 1986, lysine 1988–alanine 2079, and threonine 2116–valine 2210.

Belongs to the filamin family. Interacts with Ten-m. As to expression, germline-specific in females (at protein level). Expressed in ovary.

Its subcellular location is the cytoplasm. It is found in the cytoskeleton. The protein localises to the cell membrane. Functionally, involved in the germline ring canal formation. May tether actin microfilament within the ovarian ring canal to the cell membrane. Contributes to actin microfilaments organization. The sequence is that of Filamin-A (cher) from Drosophila melanogaster (Fruit fly).